We begin with the raw amino-acid sequence, 483 residues long: Probable glycosyltransferase 4 (483 aa).

At 1 to 26 (MSKLQDRHGGEAAADVGRRARHQRLL) the chain is on the cytoplasmic side. A helical; Signal-anchor for type II membrane protein transmembrane segment spans residues 27–47 (LSFPVFPIVLLLLAPCTIFFF). Over 48-483 (TSGDVPLPRI…KKTSRAARPM (436 aa)) the chain is Lumenal. Residues 71-119 (AVAADTSPPPPSPPSSSPPPLSFPPPPPPPSSPPPPALPVVDDHSDTQR) are disordered. Residues 77-108 (SPPPPSPPSSSPPPLSFPPPPPPPSSPPPPAL) show a composition bias toward pro residues. An N-linked (GlcNAc...) asparagine glycan is attached at asparagine 448.

This sequence belongs to the glycosyltransferase 34 family.

The protein localises to the golgi apparatus membrane. Probable glycosyltransferase that may be involved in the biosynthesis of xyloglucan. This is Probable glycosyltransferase 4 from Oryza sativa subsp. indica (Rice).